We begin with the raw amino-acid sequence, 323 residues long: ADP-L-glycero-D-manno-heptose-6-epimerase (323 aa).

Residues 10–11 (FI), 31–32 (DN), K38, R53, 75–79 (MGACS), and N92 each bind NADP(+). The active-site Proton acceptor is the Y143. K147 is an NADP(+) binding site. N170 is a binding site for substrate. Positions 171 and 179 each coordinate NADP(+). The active-site Proton acceptor is the K179. Substrate is bound by residues D181, K188, 202 to 205 (FRSC), R216, and Y281.

It belongs to the NAD(P)-dependent epimerase/dehydratase family. HldD subfamily. Homopentamer. The cofactor is NADP(+).

It carries out the reaction ADP-D-glycero-beta-D-manno-heptose = ADP-L-glycero-beta-D-manno-heptose. The protein operates within nucleotide-sugar biosynthesis; ADP-L-glycero-beta-D-manno-heptose biosynthesis; ADP-L-glycero-beta-D-manno-heptose from D-glycero-beta-D-manno-heptose 7-phosphate: step 4/4. Its function is as follows. Catalyzes the interconversion between ADP-D-glycero-beta-D-manno-heptose and ADP-L-glycero-beta-D-manno-heptose via an epimerization at carbon 6 of the heptose. The chain is ADP-L-glycero-D-manno-heptose-6-epimerase from Nitratidesulfovibrio vulgaris (strain DP4) (Desulfovibrio vulgaris).